The chain runs to 230 residues: Maleylacetoacetate isomerase (230 aa).

The 89-residue stretch at 7–95 (LRVTLYTYFR…YLDEAFPDNP (89 aa)) folds into the GST N-terminal domain. Residues 17-22 (SSCSAR), Q46, V60, 79-80 (QS), Q123, and 127-129 (NLR) contribute to the glutathione site. In terms of domain architecture, GST C-terminal spans 104–226 (NPQQRALVRS…HWRTQQDTPT (123 aa)).

It belongs to the GST superfamily. Zeta family. Glutathione is required as a cofactor.

The protein localises to the cytoplasm. It carries out the reaction 4-maleylacetoacetate = 4-fumarylacetoacetate. It participates in amino-acid degradation; L-phenylalanine degradation; acetoacetate and fumarate from L-phenylalanine: step 5/6. This Emericella nidulans (strain FGSC A4 / ATCC 38163 / CBS 112.46 / NRRL 194 / M139) (Aspergillus nidulans) protein is Maleylacetoacetate isomerase (maiA).